Reading from the N-terminus, the 174-residue chain is Large ribosomal subunit protein bL17 (174 aa).

It belongs to the bacterial ribosomal protein bL17 family. As to quaternary structure, part of the 50S ribosomal subunit. Contacts protein L32.

The sequence is that of Large ribosomal subunit protein bL17 from Acetivibrio thermocellus (strain ATCC 27405 / DSM 1237 / JCM 9322 / NBRC 103400 / NCIMB 10682 / NRRL B-4536 / VPI 7372) (Clostridium thermocellum).